The chain runs to 353 residues: Phosphate acyltransferase (353 aa).

Belongs to the PlsX family. In terms of assembly, homodimer. Probably interacts with PlsY.

The protein localises to the cytoplasm. The catalysed reaction is a fatty acyl-[ACP] + phosphate = an acyl phosphate + holo-[ACP]. Its pathway is lipid metabolism; phospholipid metabolism. Its function is as follows. Catalyzes the reversible formation of acyl-phosphate (acyl-PO(4)) from acyl-[acyl-carrier-protein] (acyl-ACP). This enzyme utilizes acyl-ACP as fatty acyl donor, but not acyl-CoA. The sequence is that of Phosphate acyltransferase from Nitrosospira multiformis (strain ATCC 25196 / NCIMB 11849 / C 71).